Reading from the N-terminus, the 181-residue chain is Regulator of G-protein signaling 5 (181 aa).

Positions 64 to 180 constitute an RGS domain; the sequence is SLDKLLQSNY…VRSEFYKELI (117 aa).

It is found in the cytoplasm. It localises to the membrane. Its function is as follows. Inhibits signal transduction by increasing the GTPase activity of G protein alpha subunits thereby driving them into their inactive GDP-bound form. Binds to G(i)-alpha and G(o)-alpha, but not to G(s)-alpha. The sequence is that of Regulator of G-protein signaling 5 (Rgs5) from Rattus norvegicus (Rat).